The chain runs to 1136 residues: Unconventional myosin-Ib (1136 aa).

In terms of domain architecture, Myosin motor spans 15-701 (IGVGDMVLLE…TLFKLEDLRK (687 aa)). Ser60 carries the phosphoserine modification. 108–115 (GESGAGKT) is an ATP binding site. Lys287 participates in a covalent cross-link: Glycyl lysine isopeptide (Lys-Gly) (interchain with G-Cter in SUMO1); alternate. Residue Lys287 forms a Glycyl lysine isopeptide (Lys-Gly) (interchain with G-Cter in SUMO2); alternate linkage. Positions 578–600 (VATLMKNLQTKNPNYIRCIKPND) are actin-binding. IQ domains are found at residues 704-733 (LEDL…SQIV), 728-748 (KKSQ…KRYQ), 750-779 (TKSS…QKRC), 779-808 (CKEA…EARN), 808-837 (NKHA…EARR), and 837-866 (RKHA…ANAG). Residues 952 to 1136 (KALYPSSVGQ…NNRLLEVAVP (185 aa)) enclose the TH1 domain.

It belongs to the TRAFAC class myosin-kinesin ATPase superfamily. Myosin family.

In terms of biological role, motor protein that may participate in process critical to neuronal development and function such as cell migration, neurite outgrowth and vesicular transport. This chain is Unconventional myosin-Ib (MYO1B), found in Homo sapiens (Human).